We begin with the raw amino-acid sequence, 350 residues long: tRNA uridine(34) hydroxylase (350 aa).

The 95-residue stretch at 146–240 (DDPDAIFIDM…YARRAREQGL (95 aa)) folds into the Rhodanese domain. Residue Cys200 is the Cysteine persulfide intermediate of the active site. The tract at residues 318–350 (QRRRRAGREKGNKIFNKSRGRLNSKLGIPDPTE) is disordered.

Belongs to the TrhO family.

The enzyme catalyses uridine(34) in tRNA + AH2 + O2 = 5-hydroxyuridine(34) in tRNA + A + H2O. In terms of biological role, catalyzes oxygen-dependent 5-hydroxyuridine (ho5U) modification at position 34 in tRNAs. The chain is tRNA uridine(34) hydroxylase from Salmonella arizonae (strain ATCC BAA-731 / CDC346-86 / RSK2980).